The primary structure comprises 880 residues: Alanine--tRNA ligase (880 aa).

Zn(2+)-binding residues include His-567, His-571, Cys-669, and His-673.

It belongs to the class-II aminoacyl-tRNA synthetase family. The cofactor is Zn(2+).

Its subcellular location is the cytoplasm. It carries out the reaction tRNA(Ala) + L-alanine + ATP = L-alanyl-tRNA(Ala) + AMP + diphosphate. Functionally, catalyzes the attachment of alanine to tRNA(Ala) in a two-step reaction: alanine is first activated by ATP to form Ala-AMP and then transferred to the acceptor end of tRNA(Ala). Also edits incorrectly charged Ser-tRNA(Ala) and Gly-tRNA(Ala) via its editing domain. This is Alanine--tRNA ligase from Bacillus cytotoxicus (strain DSM 22905 / CIP 110041 / 391-98 / NVH 391-98).